We begin with the raw amino-acid sequence, 303 residues long: MWFKNLTVYRFNKPFSVDTEALEKSLEDFTFSPCSSQDISKFGFSKALGKLGHTLVHSAENRHLICATKEEKILPSQVVKEALEEKVAQIEAEENRKLAKKEKDALKEEITTTLLPRAFSRRSQIHALILPEIEMILVDSSSATKAEELLALLRKALGSLPVIPMSFKTPIEAQLTEWLKSNSAPAPFEMQDEAELKSDSDEGGIVRFKQQDLTENEVLAHLEVGKQVHKLALHFGQSIAFVLQSDAGIKRLKFSEEFRAHNDEVSTEDPLARLDADFALMGSELIALMNSLVEVLGGLEDSL.

It belongs to the RdgC family.

It localises to the cytoplasm. It is found in the nucleoid. In terms of biological role, may be involved in recombination. In Shewanella loihica (strain ATCC BAA-1088 / PV-4), this protein is Recombination-associated protein RdgC.